A 339-amino-acid polypeptide reads, in one-letter code: tRNA N6-adenosine threonylcarbamoyltransferase (339 aa).

Fe cation contacts are provided by His111 and His115. Substrate is bound by residues 134-138 (LVSGG), Asp167, Gly180, and Asn272. Asp300 provides a ligand contact to Fe cation.

It belongs to the KAE1 / TsaD family. Requires Fe(2+) as cofactor.

The protein resides in the cytoplasm. It carries out the reaction L-threonylcarbamoyladenylate + adenosine(37) in tRNA = N(6)-L-threonylcarbamoyladenosine(37) in tRNA + AMP + H(+). Functionally, required for the formation of a threonylcarbamoyl group on adenosine at position 37 (t(6)A37) in tRNAs that read codons beginning with adenine. Is involved in the transfer of the threonylcarbamoyl moiety of threonylcarbamoyl-AMP (TC-AMP) to the N6 group of A37, together with TsaE and TsaB. TsaD likely plays a direct catalytic role in this reaction. This chain is tRNA N6-adenosine threonylcarbamoyltransferase, found in Vibrio vulnificus (strain YJ016).